Here is a 570-residue protein sequence, read N- to C-terminus: Formate--tetrahydrofolate ligase (570 aa).

65-72 (TPLGEGKT) contributes to the ATP binding site.

This sequence belongs to the formate--tetrahydrofolate ligase family.

It carries out the reaction (6S)-5,6,7,8-tetrahydrofolate + formate + ATP = (6R)-10-formyltetrahydrofolate + ADP + phosphate. The protein operates within one-carbon metabolism; tetrahydrofolate interconversion. The protein is Formate--tetrahydrofolate ligase of Herpetosiphon aurantiacus (strain ATCC 23779 / DSM 785 / 114-95).